We begin with the raw amino-acid sequence, 66 residues long: UPF0337 protein pc0632 (66 aa).

Belongs to the UPF0337 (CsbD) family.

This chain is UPF0337 protein pc0632, found in Protochlamydia amoebophila (strain UWE25).